We begin with the raw amino-acid sequence, 380 residues long: Cytochrome b (380 aa).

Transmembrane regions (helical) follow at residues 33–53 (FGSLLGLCLIIQILTGLFLAM), 77–98 (WLIRYMHANGASMFFICLFLHV), 113–133 (WNMGIMLLFTVMATAFMGYVL), and 178–198 (FFAFHFILPFIITALVLVHLL). Residues His83 and His97 each coordinate heme b. Heme b-binding residues include His182 and His196. An a ubiquinone-binding site is contributed by His201. 4 helical membrane-spanning segments follow: residues 226-246 (IKDFLGILILLMASMILTLFF), 288-308 (LGGVLALILSILILAFMPLLH), 320-340 (ITQIMYWTLVADLLILTWIGG), and 347-367 (FITIGQTASIAYFAIILIFMP).

The protein belongs to the cytochrome b family. As to quaternary structure, the cytochrome bc1 complex contains 11 subunits: 3 respiratory subunits (MT-CYB, CYC1 and UQCRFS1), 2 core proteins (UQCRC1 and UQCRC2) and 6 low-molecular weight proteins (UQCRH/QCR6, UQCRB/QCR7, UQCRQ/QCR8, UQCR10/QCR9, UQCR11/QCR10 and a cleavage product of UQCRFS1). This cytochrome bc1 complex then forms a dimer. It depends on heme b as a cofactor.

It is found in the mitochondrion inner membrane. Its function is as follows. Component of the ubiquinol-cytochrome c reductase complex (complex III or cytochrome b-c1 complex) that is part of the mitochondrial respiratory chain. The b-c1 complex mediates electron transfer from ubiquinol to cytochrome c. Contributes to the generation of a proton gradient across the mitochondrial membrane that is then used for ATP synthesis. The polypeptide is Cytochrome b (MT-CYB) (Microtus oregoni (Creeping vole)).